We begin with the raw amino-acid sequence, 463 residues long: Argininosuccinate lyase (463 aa).

This sequence belongs to the lyase 1 family. Argininosuccinate lyase subfamily.

The protein localises to the cytoplasm. The catalysed reaction is 2-(N(omega)-L-arginino)succinate = fumarate + L-arginine. It participates in amino-acid biosynthesis; L-arginine biosynthesis; L-arginine from L-ornithine and carbamoyl phosphate: step 3/3. This chain is Argininosuccinate lyase, found in Thiobacillus denitrificans (strain ATCC 25259 / T1).